We begin with the raw amino-acid sequence, 474 residues long: Cysteine--tRNA ligase (474 aa).

Cys-27 is a Zn(2+) binding site. Positions 29–39 (PTVYNYIHIGN) match the 'HIGH' region motif. Positions 212, 237, and 241 each coordinate Zn(2+). The 'KMSKS' region motif lies at 271-275 (KMSKS). Position 274 (Lys-274) interacts with ATP.

It belongs to the class-I aminoacyl-tRNA synthetase family. Monomer. It depends on Zn(2+) as a cofactor.

The protein localises to the cytoplasm. It catalyses the reaction tRNA(Cys) + L-cysteine + ATP = L-cysteinyl-tRNA(Cys) + AMP + diphosphate. In Lactobacillus delbrueckii subsp. bulgaricus (strain ATCC BAA-365 / Lb-18), this protein is Cysteine--tRNA ligase.